A 408-amino-acid polypeptide reads, in one-letter code: Multidrug resistance protein MdtG (408 aa).

The next 11 membrane-spanning stretches (helical) occupy residues 16 to 36 (LIVA…VMPF), 58 to 78 (IVFS…GGLA), 92 to 112 (LGMG…QFLI), 115 to 135 (ALLG…ATQV), 146 to 166 (TLST…GLLA), 173 to 193 (PVFF…LFCI), 224 to 244 (LFVT…ILTL), 256 to 276 (VAFI…LSAP), 290 to 310 (ILIT…YVQT), 319 to 339 (FLLG…LVYN), and 378 to 398 (AVFL…WNSL).

This sequence belongs to the major facilitator superfamily. DHA1 family. MdtG (TC 2.A.1.2.20) subfamily.

Its subcellular location is the cell inner membrane. In terms of biological role, confers resistance to fosfomycin and deoxycholate. The protein is Multidrug resistance protein MdtG of Escherichia coli O139:H28 (strain E24377A / ETEC).